The sequence spans 265 residues: Chalcone synthase (265 aa).

C40 is an active-site residue.

It belongs to the thiolase-like superfamily. Chalcone/stilbene synthases family.

The catalysed reaction is (E)-4-coumaroyl-CoA + 3 malonyl-CoA + 3 H(+) = 2',4,4',6'-tetrahydroxychalcone + 3 CO2 + 4 CoA. It participates in secondary metabolite biosynthesis; flavonoid biosynthesis. In terms of biological role, the primary product of this enzyme is 4,2',4',6'-tetrahydroxychalcone (also termed naringenin-chalcone or chalcone) which can under specific conditions spontaneously isomerize into naringenin. The chain is Chalcone synthase (CHSII) from Medicago sativa (Alfalfa).